The following is a 458-amino-acid chain: Protochlorophyllide reductase, chloroplastic (458 aa).

It belongs to the short-chain dehydrogenases/reductases (SDR) family. POR subfamily.

It localises to the plastid. The protein resides in the chloroplast. The catalysed reaction is chlorophyllide a + NADP(+) = protochlorophyllide a + NADPH + H(+). It functions in the pathway porphyrin-containing compound metabolism; chlorophyll biosynthesis. Its function is as follows. Phototransformation of protochlorophyllide (Pchlide) to chlorophyllide (Chlide). The sequence is that of Protochlorophyllide reductase, chloroplastic (PORA) from Marchantia paleacea (Liverwort).